The following is a 622-amino-acid chain: Ferredoxin-fold anticodon-binding domain-containing protein 1 homolog (622 aa).

The FDX-ACB domain maps to 529–622; sequence LYPPCYVHDV…IQRQLHVSPR (94 aa).

This chain is Ferredoxin-fold anticodon-binding domain-containing protein 1 homolog (Fdxacb1), found in Mus musculus (Mouse).